Consider the following 354-residue polypeptide: Methionine import ATP-binding protein MetN 2 (354 aa).

In terms of domain architecture, ABC transporter spans 6-250 (IELKNISVHF…PQKPLTKEFI (245 aa)). 42-49 (GYSGAGKS) is a binding site for ATP.

The protein belongs to the ABC transporter superfamily. Methionine importer (TC 3.A.1.24) family. As to quaternary structure, the complex is composed of two ATP-binding proteins (MetN), two transmembrane proteins (MetI) and a solute-binding protein (MetQ).

Its subcellular location is the cell membrane. It catalyses the reaction L-methionine(out) + ATP + H2O = L-methionine(in) + ADP + phosphate + H(+). It carries out the reaction D-methionine(out) + ATP + H2O = D-methionine(in) + ADP + phosphate + H(+). In terms of biological role, part of the ABC transporter complex MetNIQ involved in methionine import. Responsible for energy coupling to the transport system. The chain is Methionine import ATP-binding protein MetN 2 from Oenococcus oeni (strain ATCC BAA-331 / PSU-1).